A 144-amino-acid polypeptide reads, in one-letter code: Large ribosomal subunit protein uL16 (144 aa).

This sequence belongs to the universal ribosomal protein uL16 family. Part of the 50S ribosomal subunit.

Its function is as follows. Binds 23S rRNA and is also seen to make contacts with the A and possibly P site tRNAs. This Halothermothrix orenii (strain H 168 / OCM 544 / DSM 9562) protein is Large ribosomal subunit protein uL16.